Here is a 127-residue protein sequence, read N- to C-terminus: Large ribosomal subunit protein uL24A (127 aa).

Belongs to the universal ribosomal protein uL24 family. In terms of assembly, component of the large ribosomal subunit (LSU). Mature yeast ribosomes consist of a small (40S) and a large (60S) subunit. The 40S small subunit contains 1 molecule of ribosomal RNA (18S rRNA) and 33 different proteins (encoded by 57 genes). The large 60S subunit contains 3 rRNA molecules (25S, 5.8S and 5S rRNA) and 46 different proteins (encoded by 81 genes).

Its subcellular location is the cytoplasm. Its function is as follows. Component of the ribosome, a large ribonucleoprotein complex responsible for the synthesis of proteins in the cell. The small ribosomal subunit (SSU) binds messenger RNAs (mRNAs) and translates the encoded message by selecting cognate aminoacyl-transfer RNA (tRNA) molecules. The large subunit (LSU) contains the ribosomal catalytic site termed the peptidyl transferase center (PTC), which catalyzes the formation of peptide bonds, thereby polymerizing the amino acids delivered by tRNAs into a polypeptide chain. The nascent polypeptides leave the ribosome through a tunnel in the LSU and interact with protein factors that function in enzymatic processing, targeting, and the membrane insertion of nascent chains at the exit of the ribosomal tunnel. In Saccharomyces cerevisiae (strain ATCC 204508 / S288c) (Baker's yeast), this protein is Large ribosomal subunit protein uL24A.